Consider the following 124-residue polypeptide: uncharacterized protein (124 aa).

It is found in the plastid. Its subcellular location is the chloroplast. This is an uncharacterized protein from Chlamydomonas reinhardtii (Chlamydomonas smithii).